Reading from the N-terminus, the 698-residue chain is RNA cytosine-C(5)-methyltransferase NSUN2 (698 aa).

The segment covering 1-10 has biased composition (basic residues); sequence MGRKNRRNRQ. The segment at 1–28 is disordered; that stretch reads MGRKNRRNRQRRTEQRSPAEEERRKARE. Over residues 11 to 28 the composition is skewed to basic and acidic residues; it reads RRTEQRSPAEEERRKARE. S-adenosyl-L-methionine is bound by residues 182 to 188, Asp213, Asp240, and Asp266; that span reads CAAPGSK. The active-site Nucleophile is Cys319. The disordered stretch occupies residues 472–496; the sequence is AVDAENGETKPCTNQSGSSKTDSVC. The segment covering 482–493 has biased composition (polar residues); sequence PCTNQSGSSKTD.

This sequence belongs to the class I-like SAM-binding methyltransferase superfamily. RsmB/NOP family. TRM4 subfamily.

The protein resides in the nucleus. It localises to the nucleolus. The protein localises to the cytoplasm. It is found in the mitochondrion. Its subcellular location is the cytoskeleton. The protein resides in the spindle. It localises to the secreted. The protein localises to the extracellular exosome. The catalysed reaction is cytidine(48) in tRNA + S-adenosyl-L-methionine = 5-methylcytidine(48) in tRNA + S-adenosyl-L-homocysteine + H(+). It carries out the reaction cytidine(49) in tRNA + S-adenosyl-L-methionine = 5-methylcytidine(49) in tRNA + S-adenosyl-L-homocysteine + H(+). It catalyses the reaction cytidine(50) in tRNA + S-adenosyl-L-methionine = 5-methylcytidine(50) in tRNA + S-adenosyl-L-homocysteine + H(+). The enzyme catalyses cytidine(34) in tRNA precursor + S-adenosyl-L-methionine = 5-methylcytidine(34) in tRNA precursor + S-adenosyl-L-homocysteine + H(+). The catalysed reaction is a cytidine in mRNA + S-adenosyl-L-methionine = a 5-methylcytidine in mRNA + S-adenosyl-L-homocysteine + H(+). Functionally, RNA cytosine C(5)-methyltransferase that methylates cytosine to 5-methylcytosine (m5C) in various RNAs, such as tRNAs, mRNAs and some long non-coding RNAs (lncRNAs). Involved in various processes, such as epidermal stem cell differentiation, testis differentiation and maternal to zygotic transition during early development: acts by increasing protein synthesis; cytosine C(5)-methylation promoting tRNA stability and preventing mRNA decay. Methylates cytosine to 5-methylcytosine (m5C) at positions 34 and 48 of intron-containing tRNA(Leu)(CAA) precursors, and at positions 48, 49 and 50 of tRNA(Gly)(GCC) precursors. tRNA methylation is required generation of RNA fragments derived from tRNAs (tRFs). Also mediates C(5)-methylation of mitochondrial tRNAs. Catalyzes cytosine C(5)-methylation of mRNAs, leading to stabilize them and prevent mRNA decay. Cytosine C(5)-methylation of mRNAs also regulates mRNA export. Also mediates cytosine C(5)-methylation of non-coding RNAs, such as vault RNAs (vtRNAs), promoting their processing into regulatory small RNAs. Required for proper spindle assembly and chromosome segregation, independently of its methyltransferase activity. This chain is RNA cytosine-C(5)-methyltransferase NSUN2, found in Xenopus laevis (African clawed frog).